We begin with the raw amino-acid sequence, 138 residues long: Dual specificity phosphatase ibp1 (138 aa).

The Rhodanese domain occupies 19-133; sequence SPNEISIIDV…WKRRYGGQQG (115 aa). The active-site Phosphocysteine intermediate is the Cys70.

This sequence belongs to the MPI phosphatase family.

The protein resides in the cytoplasm. It localises to the nucleus. It catalyses the reaction O-phospho-L-tyrosyl-[protein] + H2O = L-tyrosyl-[protein] + phosphate. In terms of biological role, may play a role in DNA replication checkpoint via regulation of hsk1 or may act downstream of hsk1 in an S phase regulatory pathway. The sequence is that of Dual specificity phosphatase ibp1 (ibp1) from Schizosaccharomyces pombe (strain 972 / ATCC 24843) (Fission yeast).